Reading from the N-terminus, the 365-residue chain is Endophilin-B1 (365 aa).

An N-acetylmethionine modification is found at Met1. Residues 1 to 30 (MNIMDFNVKKLAADAGTFLSRAVQFTEEKL) are membrane-binding amphipathic helix. Residues 1–37 (MNIMDFNVKKLAADAGTFLSRAVQFTEEKLGQAEKTE) form a required for membrane binding region. Positions 27–261 (EEKLGQAEKT…LGSFPSNYHS (235 aa)) constitute a BAR domain. Thr145 carries the post-translational modification Phosphothreonine; by CDK5. A coiled-coil region spans residues 155 to 195 (YKTIAKERKLLQNKRLDLDAAKTRLKKAKAAETRASSEQEL). Residues 305–365 (GGSRRARVLY…VPITYLELLN (61 aa)) enclose the SH3 domain.

The protein belongs to the endophilin family. In terms of assembly, homodimer, and heterodimer with SH3GLB2. Binds BAX; induction of apoptosis augments BAX binding. Binds DNM1, HTT, AMPH, BIN1 and ARFGAP1. Interacts with UVRAG; UVRAG bridges the interaction to BECN1 indicative for an association with the PI3K complex II (PI3KC3-C2). Phosphorylated at Thr-145 by CDK5; this phosphorylation is required for autophagy induction in starved neurons and facilitates homodimerization.

Its subcellular location is the cytoplasm. The protein localises to the golgi apparatus membrane. It localises to the mitochondrion outer membrane. It is found in the cytoplasmic vesicle. The protein resides in the autophagosome membrane. Its subcellular location is the midbody. Functionally, may be required for normal outer mitochondrial membrane dynamics. Required for coatomer-mediated retrograde transport in certain cells. May recruit other proteins to membranes with high curvature. May promote membrane fusion. Involved in activation of caspase-dependent apoptosis by promoting BAX/BAK1 activation. Involved in caspase-independent apoptosis during nutrition starvation and involved in the regulation of autophagy. Activates lipid kinase activity of PIK3C3 during autophagy probably by associating with the PI3K complex II (PI3KC3-C2). Associated with PI3KC3-C2 during autophagy may regulate the trafficking of ATG9A from the Golgi complex to the peripheral cytoplasm for the formation of autophagosomes by inducing Golgi membrane tubulation and fragmentation. Involved in regulation of degradative endocytic trafficking and cytokinesis, probably in the context of PI3KC3-C2. The protein is Endophilin-B1 (SH3GLB1) of Bos taurus (Bovine).